The following is a 239-amino-acid chain: Ribosomal RNA small subunit methyltransferase G (239 aa).

S-adenosyl-L-methionine contacts are provided by residues Gly78, Phe83, 129–130 (AE), and Arg148.

This sequence belongs to the methyltransferase superfamily. RNA methyltransferase RsmG family.

The protein resides in the cytoplasm. Specifically methylates the N7 position of a guanine in 16S rRNA. This is Ribosomal RNA small subunit methyltransferase G from Alkaliphilus oremlandii (strain OhILAs) (Clostridium oremlandii (strain OhILAs)).